A 1392-amino-acid chain; its full sequence is DNA-directed RNA polymerase subunit beta (1392 aa).

Belongs to the RNA polymerase beta chain family. In terms of assembly, the RNAP catalytic core consists of 2 alpha, 1 beta, 1 beta' and 1 omega subunit. When a sigma factor is associated with the core the holoenzyme is formed, which can initiate transcription.

The catalysed reaction is RNA(n) + a ribonucleoside 5'-triphosphate = RNA(n+1) + diphosphate. DNA-dependent RNA polymerase catalyzes the transcription of DNA into RNA using the four ribonucleoside triphosphates as substrates. The chain is DNA-directed RNA polymerase subunit beta from Neisseria meningitidis serogroup A / serotype 4A (strain DSM 15465 / Z2491).